Here is a 3901-residue protein sequence, read N- to C-terminus: MAIGNDELLASHEEHSRCQFPRLVANPSEEKCLRCNLDVPIRNLLKEACAQYETSLDYVLGAIWAIILHQYIQDDYVGFAVVRRTRTGEAEAEFTDSAERSYSWRTPIHGEMAIGELIKPSTWKRSPYAPGVDLFNTSLVIEEEQQQEQTNTGHHVLKEPFQISLLVKCWPDSPVISLVFSSSYLHPTFGKALASSIEQCARGILSCHDSLVNQMNLFSPIQREIMTRWQGVPSLTSHFNFLYEIVCHNAQHHPSVVALDAWDGRWSYQELDEATSRLAARLVTHGVGPGVFVPVCFDKSCWAVVAMLAINKAGAAFVPIDPSYPAERRQMIILTVAASVILTSQQHLNLFPPSPEVMTICLSPSILSDSPASGYPRRMRFEGPAYVLFTSGSTGEPKGCEISHQAFASLVNHTEDLHLTPESRTLQFASYSFGMSVIEIFCTLVAGGTVCIPSAEQRLNDLATAIKTMEINWAILTPTVIASLYPEDLPHLRFVLVAGEISDQSAVDQWAAAGVDIRHAYGLTEWTGIFAVSHKISGQGTGQTTIGKPVDAHAWLVNTQNPAQLVPLGAPGELVIKGPGLARGYLHDPLRTKASFLSDLPWLAEWKLAHGQVYRTGDIMRYHVDGSLVYLHRKDNQIKIRGLRVELGEIESHLTRILKGAKRVAVIACKPKGSHDLHVLIALILLPHVADGQLLAIGRRSKGLPFVQLPGKTREELRDARESLRRWLPDYMIPQFLLPLVDMPTTVSGKIDRRRIRTLLNELSVKELMNHAGVQVEHRLPVTANEIVVHEVTCKSLGLDLVSMQDSFFDLAGDSVAAMKMSGLARQHGLQLTVKDIFEAPILQDMATRLTRIKELTVTAIPFALLPNVVPSQIVAEIAEQAKVDPLEITDAYPCSALQEGLCALSMRDAQSYKVRLICHIRPGTDLQVFRAAWERTYLINDVLRTRFVTSSTHGAIQAVIQRPFRWDEAESFEQYVTLIEQEPMGLGKQLVRACLLRDPRSQHQQTAFVLTLHHGICDRWSIRQLLEQIDRQVHAFPKQLELDPIEFRPFISYITETASKSAEYWENQFQDIKAVIFPELPAPDYTPVADQLTQYDIKLPTRLVREISIANYIRLAWALVLAHNTSSDDVVFGAIVSGRASPVKGIVTLTGPTIATVPIRINLSREMTVLQALTSVERQFIEMLPWEQAGLQNIRRLSPEADRACSFQSLFTVQPFLGNPPPLFSACEEGAAIAGGFASYALNIECYISEDERRMQAKVAFDPRVIALGRVRRLLEHLQVVLNEVAAQTERRLSSISPLSPSDMSLLWEWNKSVPPKPKELLHEIIQSHAQKTPKSPAVSAFDGELTFEELEWHATQLAGELLQQVPHPGMLLPMLFEKSVWVTVAMLAVLKIGSAIVLLDGSYSIERMRTICADVEAPLVVCSSQMTSTVEQIGLRPVIVAHTRAFFSKSASPVSLPPVRVHSDSPCYMIFTSGSTGMPKGLLVNHGAFAASMLGWMPKLQVDKSSRVLQFSSFAFDACFAETFTALFAGACICVPSDDQRMNDLHAAMRQHRISHAILTPSSARVVRAEQVPSLRVLALVGEPILPSDMAYWAPRVRLLNGYGPAECAPASVVQYIDGSPALDVRDIGHPVGCVAWVCDPRDSEILKPVGVAGELLIEGPNVGLGYFKDAAKTDSAFVQPRWLQSLRGMTGVRAYRSSDLVCYTEDGRLRYLGRIGNQVKLRGQRLDPTHIEHQLARCFPGATEVAVVVGCPRNASDRPTLAAFVVVDKKANGNGSTDFHDVPTKDVANRAATARARMQQVLPGYMVPTLMIPVSSLPCSAAGKLDRRALENEIASRTWKELSQYESANESSTNRTPLDTERDLQGIWAKVLDLPMEAVGLRQSFFALGGDSITAMLVVAEARGRRVGLNITVDDIFRFRTIEQIAAQAATRAATIQQLCSHDVLDVPFKLTPIQQLFFRTQGQKVRHRFNHNVLLHLTQRIPYHRLESAMKTIVTAHPMLRARFVPGTAGLDWKQNIPSNIEGTFRCKHQTNGTMARILADGQRSLNITAGPVFSADLIDTEERQTILLVAHHLVVDLVSWTVILNDLDELLCGDPISGHTSTSFQTWSRLLDEYVRGQARAARLPDAQPWDGIEGFWGISQEQMTFGSCEDTTVQIERETTDLLLGDVNKTFGTQPVEVLHAALLFAFIQAFPKRPPPATYSEAHGREPWDATTDLTRTVGWFTTLAPVLLQLDSASELSEAVGQVKDARRRLTRNGLDAFTNRQQAGVMEIVFNYGGRYSQQLQKAGALFEVQSFQTLNIFDTGLDVRRWSVVDINSFVQDGKLTFVFTHPCGPSQTRIISEWTLHLMKTLKTLATDFSSASRIYTPMDFPLLKTDKAQLERLLSSLSWISPASDIENLYPCAPIQRGILLSQEKERSHYHVTMLWEIQIAGGVSASVPKAKDAIHQVITCHPCLRTSFVRSFSERALYDQVVTHNASPQIEVVHNPSKGWQGRPSAKGSPLTPEFPNRFTIHVDQEQRVYIRLDVTHALVDAMSFSLIQRDLCLAYEGRLNISSGPPYANFIAYLQSRNEEEDRVFWEEELEGIQPCLFPSLTDYQVGEVDDALSWSVELQHSEEIYAYCRAHSVTPANIFCLAWSLVLRSYVGSDDVCFGVLASGRELPFEGAQDVVGPLINVLTFRNRLKENLSVGECLQQVHTKYLRYLQHQTYPLADISHQKGDAVLFNTALSIQRVMVSADTPTSTSLNLVHRRDPVEYAIAINVDMEPSRIAVHLRYWLSSLSSEMAMLIASSFEQAVHQIITNDQLHPAQLDLVSTDHKRLLHRWNSTLPAFDEAPIHETIQQHVRETPDALAVRWSKGSFTYRELGLLSDRLGGHLRRQGVAPGAFVPLCFDKSPWTVVALLAVIKSGAAFALCDVTHPDSRLRSICQDLQSTVILCSPDQETRCKKIAEKAIVVGEHNNSWKGDTVGPPTPELSVRAPLFVVYTSGSTGKPKGVLIEHRSFCALVHYQISVWGMSPAARVMQFASYAFDASVFEILFPLMRGTCTCILTEVERRDYLDATMKRLRVTHAFLTPSVARQLSPAAVPDLQVLVCGGEPLSHQDINQWTVNVRLVEAYGPAECTVFSACQPSLTPASCPSDIGRPVGCVVWLVDPDDTERLMPVGSLGEILIEGPIVGRGYINNSQATESSFIKPPAWLRAIRPDLDPTTRLYKTGDLARYFPDGRLDIHGRKDSQIKIRGQRIELGEVEFQVQSRFKLAVGVVVDVAPTGPNGSTALCAFICFGGRVSPSEVDSQVLRAADEDFAAEAASASAALFECLPAYMVPSYFFPLANLPVNASGKADRRYLKSLVDIPAEQLNQYRPLSNRQQRLPSTAGEQLLHNIWSTALGLDGKLIGADDSFFQVGGDSVSAMKVAAAARQQGLEISVADIFAHPRLSALAARSRSKDASDSGFDPTPFSLCPPGAKVLLPMLLRARNMLPPKSTIIDILPVSEGQGFFLTRVALHHFSFAVEGKLDIERIRHACETVYLFFAILRTIFIHWHGQILQLVLDNIEVPFHHILTDSDPAEVHRELRDLDRKVASVLDEQPPCAFILISDRSGTRHELIFRLSHTQWDGLSLAELFSAFGSAYHNRPIPPTTPLTTVVYHRLMRNKTKSLSFWRDYLRGSTISSLIPSAPETTDLSPGTTIWENTNLQPAPEPPSGITMASVVKAAWALVIAQEKGRGCRDIVFGQTVNGRSSALPNIERIFGCCLNFIPVRIRVREEMSIYDLLRHTQAQYQETVAHDDVGFQSIVDESTDWPRGTYFNSIVQHQNIPLHHVMPLEDLKTHFTLNGYFRPGREVIIFTEPDGDVLSVQFCANPNVIEFSYAQKLHRTLVDLIVHLCRCPDDLVSTLLVE.

Residues 248–641 (HNAQHHPSVV…HRKDNQIKIR (394 aa)) form an adenylation 1 region. The Carrier 1 domain occupies 780-854 (LPVTANEIVV…DMATRLTRIK (75 aa)). S815 is modified (O-(pantetheine 4'-phosphoryl)serine). The tract at residues 891-1164 (DAYPCSALQE…IATVPIRINL (274 aa)) is condensation 1. The adenylation 2 stretch occupies residues 1328 to 1725 (QSHAQKTPKS…GRIGNQVKLR (398 aa)). A Carrier 2 domain is found at 1858 to 1936 (RTPLDTERDL…QIAAQAATRA (79 aa)). The residue at position 1895 (S1895) is an O-(pantetheine 4'-phosphoryl)serine. An epimerase region spans residues 1953 to 2261 (KLTPIQQLFF…KDARRRLTRN (309 aa)). Residues 2403–2826 (ENLYPCAPIQ…LVSTDHKRLL (424 aa)) are condensation 2. The tract at residues 2846–3243 (QQHVRETPDA…GRKDSQIKIR (398 aa)) is adenylation 3. The region spanning 3375-3451 (LPSTAGEQLL…ALAARSRSKD (77 aa)) is the Carrier 3 domain. O-(pantetheine 4'-phosphoryl)serine is present on S3412. The segment at 3509–3837 (HHFSFAVEGK…EDLKTHFTLN (329 aa)) is condensation 3.

This sequence belongs to the NRP synthetase family.

In terms of biological role, nonribosomal peptide synthetase; part of the gene cluster that mediates the biosynthesis of oxepinamides, derivatives of anthranilyl-containing tripeptides that share an oxepin ring and a fused pyrimidinone moiety. The nonribosomal peptide synthetase (NRPS) opaA assembles the quinazolinone core with D-Phe incorporation. The first adenylation domain (A1) of opaA loads and activates anthranilic acid whereas the second A domain (A2) is for activating of L-Phe, which is then converted to D-form by the E domain. The third A domain (A3) is responsible for L-Ile activation and the terminal condensation domain C3 for cyclization and releasing the NRPS product protuboxepin K. The cytochrome P450 monooxygenase opaB then catalyzes alone the oxepin ring formation to convert protuboxepin K into protuboxepin A. The flavoenzyme opaC installs subsequently one hydroxyl group at the oxepin ring, accompanied by double bond migration, to form 15-epi-oxepinamide E. The epimerase opaE changes the D-Phe residue back to L-form, leading to oxepinamide E, which is further methylated at the hydroxyl group at C-12 by the O-methyltransferase OpaF to yield oxepinamide F. The protein is Nonribosomal peptide synthetase opaA of Aspergillus ustus.